Here is a 20-residue protein sequence, read N- to C-terminus: SRLPPATRDKLADEITFFPA.

In terms of assembly, monomer.

The enzyme catalyses 2 a Fe(II)-siderophore + NAD(+) + H(+) = 2 a Fe(III)-siderophore + NADH. In terms of biological role, reductase activity that acts on Fe(3+)-chelates and NADH as an electron donor and requires the presence of FMN for full activity. May play a role in iron uptake. The chain is Ferric reductase A (ferA) from Paracoccus denitrificans.